The following is a 59-amino-acid chain: SPbeta prophage-derived uncharacterized protein YosB (59 aa).

This is SPbeta prophage-derived uncharacterized protein YosB (yosB) from Bacillus subtilis (strain 168).